The following is a 474-amino-acid chain: PRAME family member 1 (474 aa).

The stretch at 97–124 is one LRR 1; degenerate repeat; that stretch reads RWKLQVLDLRDVDENFWARWPGAWALSC. Residues 179–203 form an LRR 2; degenerate repeat; it reads HLCCSKLVNYLTPIKYLRKSLKIIY. An LRR 3; degenerate repeat occupies 204–230; that stretch reads LNSIQELEIRNMSWPRLIRKLRCYLKE. The stretch at 231 to 265 is one LRR 4; degenerate repeat; it reads MKNLRKLVFSRCHHYTSDNELEGRLVAKFSSVFLR. 5 LRR repeats span residues 266–291, 292–323, 324–342, 348–375, and 376–400; these read LEHLQLLKIKLITFFSGHLEQLIRCL, QNPLENLELTYGYLLEEDMKCLSQYPSLGYLK, HLNLSYVLLFRISLEPLGA, AASLKTLILEGCQIHYSQLSAILPGLSR, and CSQLTTFYFGRNCMSIDALKDLLRH.

This sequence belongs to the PRAME family.

The polypeptide is PRAME family member 1 (Homo sapiens (Human)).